Here is an 833-residue protein sequence, read N- to C-terminus: Glycerol-3-phosphate acyltransferase (833 aa).

Residues 309-314 (CHRSHI) carry the HXXXXD motif motif.

Belongs to the GPAT/DAPAT family.

The protein localises to the cell inner membrane. It carries out the reaction sn-glycerol 3-phosphate + an acyl-CoA = a 1-acyl-sn-glycero-3-phosphate + CoA. Its pathway is phospholipid metabolism; CDP-diacylglycerol biosynthesis; CDP-diacylglycerol from sn-glycerol 3-phosphate: step 1/3. The sequence is that of Glycerol-3-phosphate acyltransferase from Pseudomonas syringae pv. syringae (strain B728a).